The primary structure comprises 163 residues: Homoaconitase small subunit (163 aa).

The protein belongs to the LeuD family. As to quaternary structure, heterodimer of HacA and HacB.

It carries out the reaction (2R,3S)-homoisocitrate = cis-homoaconitate + H2O. It participates in amino-acid biosynthesis; L-lysine biosynthesis via AAA pathway; L-alpha-aminoadipate from 2-oxoglutarate: step 3/5. Is not inhibited by lysine. Catalyzes the reversible hydration of cis-homoaconitate ((Z)-but-1-ene-1,2,4-tricarboxylate) to homoisocitrate ((1R,2S)-1-hydroxybutane-1,2,4-tricarboxylate). Can catalyze neither the dehydration of (R)-homocitrate ((2R)-2-hydroxybutane-1,2,4-tricarboxylate) into cis-homoaconitate in vitro, nor the reverse reaction. Is not active toward (S)-homocitrate, cis-aconitate or citrate as substrate. This chain is Homoaconitase small subunit (hacB), found in Thermus thermophilus (strain ATCC BAA-163 / DSM 7039 / HB27).